The following is a 282-amino-acid chain: 4-diphosphocytidyl-2-C-methyl-D-erythritol kinase (282 aa).

The active site involves K11. Position 93-103 (93-103) interacts with ATP; the sequence is LVSAGLAGGSA. D133 is an active-site residue.

The protein belongs to the GHMP kinase family. IspE subfamily.

It carries out the reaction 4-CDP-2-C-methyl-D-erythritol + ATP = 4-CDP-2-C-methyl-D-erythritol 2-phosphate + ADP + H(+). It functions in the pathway isoprenoid biosynthesis; isopentenyl diphosphate biosynthesis via DXP pathway; isopentenyl diphosphate from 1-deoxy-D-xylulose 5-phosphate: step 3/6. Its function is as follows. Catalyzes the phosphorylation of the position 2 hydroxy group of 4-diphosphocytidyl-2C-methyl-D-erythritol. The chain is 4-diphosphocytidyl-2-C-methyl-D-erythritol kinase from Ehrlichia canis (strain Jake).